The chain runs to 42 residues: Cytochrome b559 subunit beta (42 aa).

The chain crosses the membrane as a helical span at residues 17 to 33; it reads WLSIHALAVPTVFFLGA. Histidine 21 is a binding site for heme.

Belongs to the PsbE/PsbF family. In terms of assembly, heterodimer of an alpha subunit and a beta subunit. PSII is composed of 1 copy each of membrane proteins PsbA, PsbB, PsbC, PsbD, PsbE, PsbF, PsbH, PsbI, PsbJ, PsbK, PsbL, PsbM, PsbT, PsbX, PsbY, PsbZ, Psb30/Ycf12, at least 3 peripheral proteins of the oxygen-evolving complex and a large number of cofactors. It forms dimeric complexes. Requires heme b as cofactor.

It localises to the plastid. The protein localises to the chloroplast thylakoid membrane. Its function is as follows. This b-type cytochrome is tightly associated with the reaction center of photosystem II (PSII). PSII is a light-driven water:plastoquinone oxidoreductase that uses light energy to abstract electrons from H(2)O, generating O(2) and a proton gradient subsequently used for ATP formation. It consists of a core antenna complex that captures photons, and an electron transfer chain that converts photonic excitation into a charge separation. The chain is Cytochrome b559 subunit beta from Tupiella akineta (Green alga).